Consider the following 191-residue polypeptide: CASP-like protein 1D1 (191 aa).

At 1–22 (MTSTSKDTPESGYAVPPPNLFG) the chain is on the cytoplasmic side. A helical transmembrane segment spans residues 23–43 (VDFGLRLLLLASAVSALVVLV). Over 44–73 (TSKQTESIPTSLPPPFPAFISRDAKFQHSP) the chain is Extracellular. Residues 74 to 94 (AFIYLLVALSVTCFYSIITMV) form a helical membrane-spanning segment. The Cytoplasmic portion of the chain corresponds to 95-118 (ASFAAITSPSSSPRMLFHLVLSDA). Residues 119 to 139 (VMAGVMASAAGTAGSVAYLGL) traverse the membrane as a helical segment. Over 140 to 160 (KGNSHVNWNKVCNVYDKFCRH) the chain is Extracellular. A helical membrane pass occupies residues 161–181 (VGSSAAVSLVASVLLVSLVVL). Topologically, residues 182–191 (SSYSLYRRCR) are cytoplasmic.

Belongs to the Casparian strip membrane proteins (CASP) family. In terms of assembly, homodimer and heterodimers.

It localises to the cell membrane. The sequence is that of CASP-like protein 1D1 from Musa acuminata (Banana).